A 100-amino-acid polypeptide reads, in one-letter code: Large ribosomal subunit protein uL23 (100 aa).

This sequence belongs to the universal ribosomal protein uL23 family. Part of the 50S ribosomal subunit. Contacts protein L29, and trigger factor when it is bound to the ribosome.

Functionally, one of the early assembly proteins it binds 23S rRNA. One of the proteins that surrounds the polypeptide exit tunnel on the outside of the ribosome. Forms the main docking site for trigger factor binding to the ribosome. This is Large ribosomal subunit protein uL23 from Prochlorococcus marinus (strain MIT 9313).